Reading from the N-terminus, the 292-residue chain is Formamidopyrimidine-DNA glycosylase (292 aa).

Pro2 serves as the catalytic Schiff-base intermediate with DNA. Glu3 (proton donor) is an active-site residue. The Proton donor; for beta-elimination activity role is filled by Lys60. DNA is bound by residues His109, Arg128, and Lys173. The FPG-type zinc-finger motif lies at 258-292 (NVYRRTGKKCRQCKNLIERQKISGRSTHWCRKCQK). Arg282 acts as the Proton donor; for delta-elimination activity in catalysis.

This sequence belongs to the FPG family. Monomer. Zn(2+) is required as a cofactor.

It catalyses the reaction Hydrolysis of DNA containing ring-opened 7-methylguanine residues, releasing 2,6-diamino-4-hydroxy-5-(N-methyl)formamidopyrimidine.. The enzyme catalyses 2'-deoxyribonucleotide-(2'-deoxyribose 5'-phosphate)-2'-deoxyribonucleotide-DNA = a 3'-end 2'-deoxyribonucleotide-(2,3-dehydro-2,3-deoxyribose 5'-phosphate)-DNA + a 5'-end 5'-phospho-2'-deoxyribonucleoside-DNA + H(+). Functionally, involved in base excision repair of DNA damaged by oxidation or by mutagenic agents. Acts as a DNA glycosylase that recognizes and removes damaged bases. Has a preference for oxidized purines, such as 7,8-dihydro-8-oxoguanine (8-oxoG). Has AP (apurinic/apyrimidinic) lyase activity and introduces nicks in the DNA strand. Cleaves the DNA backbone by beta-delta elimination to generate a single-strand break at the site of the removed base with both 3'- and 5'-phosphates. The polypeptide is Formamidopyrimidine-DNA glycosylase (Prochlorococcus marinus subsp. pastoris (strain CCMP1986 / NIES-2087 / MED4)).